The sequence spans 253 residues: 3-deoxy-manno-octulosonate cytidylyltransferase (253 aa).

The protein belongs to the KdsB family.

It is found in the cytoplasm. It catalyses the reaction 3-deoxy-alpha-D-manno-oct-2-ulosonate + CTP = CMP-3-deoxy-beta-D-manno-octulosonate + diphosphate. Its pathway is nucleotide-sugar biosynthesis; CMP-3-deoxy-D-manno-octulosonate biosynthesis; CMP-3-deoxy-D-manno-octulosonate from 3-deoxy-D-manno-octulosonate and CTP: step 1/1. It participates in bacterial outer membrane biogenesis; lipopolysaccharide biosynthesis. Functionally, activates KDO (a required 8-carbon sugar) for incorporation into bacterial lipopolysaccharide in Gram-negative bacteria. This chain is 3-deoxy-manno-octulosonate cytidylyltransferase, found in Acinetobacter baumannii (strain SDF).